Here is a 1323-residue protein sequence, read N- to C-terminus: Glutamate receptor ionotropic, NMDA 2D (1323 aa).

Residues 1–27 (MRGAGGPRGPRGPAKMLLLLALACASP) form the signal peptide. Residues 28–579 (FPEEVPGPGA…SPSAFLEPYS (552 aa)) lie on the Extracellular side of the membrane. Residue N89 is glycosylated (N-linked (GlcNAc...) asparagine). C101 and C345 are joined by a disulfide. N349, N363, N381, and N464 each carry an N-linked (GlcNAc...) asparagine glycan. Disulfide bonds link C452–C480 and C459–C481. S536, T538, and R543 together coordinate L-glutamate. Residue N566 is glycosylated (N-linked (GlcNAc...) asparagine). A helical transmembrane segment spans residues 580-601 (PAVWVMMFVMCLTVVAVTVFIF). The Cytoplasmic segment spans residues 602 to 626 (EYLSPVGYNRSLATGKRPGGSTFTI). An intramembrane region (discontinuously helical) is located at residues 627 to 638 (GKSIWLLWALVF). The pore-forming stretch occupies residues 628–647 (KSIWLLWALVFNNSVPVENP). At 639–650 (NNSVPVENPRGT) the chain is on the cytoplasmic side. The helical transmembrane segment at 651 to 671 (TSKIMVLVWAFFAVIFLASYT) threads the bilayer. Residues 672–840 (ANLAAFMIQE…EVMSSKLDID (169 aa)) are Extracellular-facing. Residue N712 is glycosylated (N-linked (GlcNAc...) asparagine). The L-glutamate site is built by S714, T715, and D756. Residues C770 and C825 are joined by a disulfide bond. A helical membrane pass occupies residues 841–864 (NMAGVFYMLLVAMGLSLLVFAWEH). Topologically, residues 865–1323 (LVYWRLRHCL…AHFSSLESEV (459 aa)) are cytoplasmic. Disordered regions lie at residues 897–952 (EAAP…PGGA), 977–1112 (AAPR…SLGG), and 1201–1323 (PWAA…ESEV). The segment covering 899 to 929 (APPPAKPPPPPQPLPSPAYPAARPPPGPAPF) has biased composition (pro residues). Residues 931–940 (PRERAAADRW) are compositionally biased toward basic and acidic residues. Residues 977–986 (AAPRGAAGRP) are compositionally biased toward low complexity. The segment covering 987 to 1001 (LSPPTTQPPQKPPPS) has biased composition (pro residues). Residues 1030 to 1039 (AAAAAAVGPP) show a composition bias toward low complexity. The segment covering 1080 to 1092 (TAPPPRRAAPPPC) has biased composition (pro residues). A compositionally biased stretch (basic residues) spans 1208–1228 (PRRRARCGCPRPHPHRPRASH). Residue R1303 is modified to Omega-N-methylarginine. Phosphoserine is present on S1313. The PDZ-binding motif lies at 1321-1323 (SEV).

Belongs to the glutamate-gated ion channel (TC 1.A.10.1) family. NR2D/GRIN2D subfamily. As to quaternary structure, heterotetramer. Forms heterotetrameric channels composed of two GluN1/zeta subunits (GRIN1), and two identical GluN2/epsilon subunits (GRIN2A, GRIN2B, GRIN2C or GRIN2D) or GluN3 subunits (GRIN3A or GRIN3B) (in vitro). In vivo, the subunit composition may depend on the expression levels of the different subunits. Interacts with PDZ domains of PATJ and DLG4. As to expression, detected in neonate brain synaptosomes (at protein level).

It localises to the cell membrane. It is found in the postsynaptic cell membrane. The catalysed reaction is Ca(2+)(in) = Ca(2+)(out). It carries out the reaction Na(+)(in) = Na(+)(out). It catalyses the reaction K(+)(in) = K(+)(out). Component of N-methyl-D-aspartate (NMDA) receptors (NMDARs) that function as heterotetrameric, ligand-gated cation channels with high calcium permeability and voltage-dependent block by Mg(2+). Participates in synaptic plasticity for learning and memory formation. Channel activation requires binding of the neurotransmitter L-glutamate to the GluN2 subunit, glycine or D-serine binding to the GluN1 subunit, plus membrane depolarization to eliminate channel inhibition by Mg(2+). NMDARs mediate simultaneously the potasium efflux and the influx of calcium and sodium. Each GluN2 subunit confers differential attributes to channel properties, including activation, deactivation and desensitization kinetics, pH sensitivity, Ca2(+) permeability, and binding to allosteric modulators. The chain is Glutamate receptor ionotropic, NMDA 2D from Mus musculus (Mouse).